The primary structure comprises 397 residues: Oxygen-dependent coproporphyrinogen-III oxidase, chloroplastic (397 aa).

The disordered stretch occupies residues 76-95 (ESDMGSNVTSNSSSVRGRFE). The span at 79–90 (MGSNVTSNSSSV) shows a compositional bias: polar residues. Positions 135-144 (VLQDGAVFEK) are important for dimerization. Residue Ser-185 participates in substrate binding. The Proton donor role is filled by His-199. Residues 201 to 203 (NYR) and 355 to 360 (GGRIES) contribute to the substrate site. Residues 337–372 (YVEFNLVYDRGTTFGLKTGGRIESILVSLPLTARWE) are important for dimerization.

Belongs to the aerobic coproporphyrinogen-III oxidase family. As to quaternary structure, homodimer.

The protein localises to the plastid. It is found in the chloroplast. The enzyme catalyses coproporphyrinogen III + O2 + 2 H(+) = protoporphyrinogen IX + 2 CO2 + 2 H2O. It participates in porphyrin-containing compound metabolism; protoporphyrin-IX biosynthesis; protoporphyrinogen-IX from coproporphyrinogen-III (O2 route): step 1/1. Functionally, involved in the heme and chlorophyll biosynthesis. Catalyzes the aerobic oxidative decarboxylation of propionate groups of rings A and B of coproporphyrinogen-III to yield the vinyl groups in protoporphyrinogen-IX. This chain is Oxygen-dependent coproporphyrinogen-III oxidase, chloroplastic (CPX), found in Nicotiana tabacum (Common tobacco).